Consider the following 445-residue polypeptide: Type II methyltransferase M.Bpa9945I (445 aa).

In terms of domain architecture, SAM-dependent MTase C5-type spans 1 to 444; that stretch reads MIVIDLFSGA…RAVKDVINGH (444 aa). Cysteine 136 is a catalytic residue.

The protein belongs to the class I-like SAM-binding methyltransferase superfamily. C5-methyltransferase family.

Its subcellular location is the cytoplasm. The enzyme catalyses a 2'-deoxycytidine in DNA + S-adenosyl-L-methionine = a 5-methyl-2'-deoxycytidine in DNA + S-adenosyl-L-homocysteine + H(+). Component of antiviral defense system DISARM (defense island system associated with restriction-modification), composed of DrmE, DrmA, DrmB, DrmC and DrmMII. DISARM is probably a multi-gene restriction module, this subunit is a DNA methylase. Expression of DISARM in B.subtilis (strain BEST7003) confers resistance to phages Nf, phi29, phi105, phi3T, SPO1, SPR and SPP1. Protection is over 10(7)-fold against phi3T, 10(4)-10(5)-fold against Nf, phi29, phi105 and SPR, 100-fold against SPO1 and 10-fold against SPP1. DISARM does not interfere with phage adsorption, but instead interferes with (phi3T) DNA replication early in its cycle, preventing replication, circularization and lysogeny and probably causes phage DNA degradation (DNA is degraded in SPP1-infected cells). Expression of this methylase alone leads to highly methylated phage, however they are still susceptible to the DISARM system. Its function is as follows. A methylase, recognizes the double-stranded sequence 5'-CCWGG-3', methylates C-2 on both strands. Phage Nf does not have any 5'-CCWGG-3' motifs but is still targeted by the DISARM system. This Bacillus paralicheniformis (strain ATCC 9945a / NCIMB 11709 / CD-2) protein is Type II methyltransferase M.Bpa9945I.